Consider the following 256-residue polypeptide: Triosephosphate isomerase (256 aa).

10 to 12 (NWK) contacts substrate. Residue H97 is the Electrophile of the active site. The Proton acceptor role is filled by E169. Substrate is bound by residues G175, S214, and 235 to 236 (GG).

Belongs to the triosephosphate isomerase family. As to quaternary structure, homodimer.

It localises to the cytoplasm. It carries out the reaction D-glyceraldehyde 3-phosphate = dihydroxyacetone phosphate. The protein operates within carbohydrate biosynthesis; gluconeogenesis. Its pathway is carbohydrate degradation; glycolysis; D-glyceraldehyde 3-phosphate from glycerone phosphate: step 1/1. Its function is as follows. Involved in the gluconeogenesis. Catalyzes stereospecifically the conversion of dihydroxyacetone phosphate (DHAP) to D-glyceraldehyde-3-phosphate (G3P). This Haemophilus ducreyi (strain 35000HP / ATCC 700724) protein is Triosephosphate isomerase.